Reading from the N-terminus, the 166-residue chain is Lipoprotein signal peptidase (166 aa).

4 helical membrane-spanning segments follow: residues 10–30 (GGALAPWLGISLIVILFDQLT), 32–52 (IAVLKTFAYGAMHALTPFFNL), 71–91 (WQRWAFTALGIGATLVICYLL), and 100–120 (FSLSLALILGGALGNVIDRLI). Active-site residues include D126 and D144. Residues 135 to 155 (WHWPAFNLADSAITVGAVLLI) traverse the membrane as a helical segment.

It belongs to the peptidase A8 family.

The protein localises to the cell inner membrane. The enzyme catalyses Release of signal peptides from bacterial membrane prolipoproteins. Hydrolyzes -Xaa-Yaa-Zaa-|-(S,diacylglyceryl)Cys-, in which Xaa is hydrophobic (preferably Leu), and Yaa (Ala or Ser) and Zaa (Gly or Ala) have small, neutral side chains.. The protein operates within protein modification; lipoprotein biosynthesis (signal peptide cleavage). Its function is as follows. This protein specifically catalyzes the removal of signal peptides from prolipoproteins. In Burkholderia mallei (strain ATCC 23344), this protein is Lipoprotein signal peptidase.